A 143-amino-acid chain; its full sequence is Meiotically up-regulated gene 128 protein (143 aa).

In terms of biological role, has a role in meiosis. This Schizosaccharomyces pombe (strain 972 / ATCC 24843) (Fission yeast) protein is Meiotically up-regulated gene 128 protein (mug128).